A 201-amino-acid polypeptide reads, in one-letter code: Small ribosomal subunit protein uS4c (201 aa).

Residues 89–152 form the S4 RNA-binding domain; the sequence is MRLDNILFRL…NSRTLVQNLI (64 aa).

This sequence belongs to the universal ribosomal protein uS4 family. In terms of assembly, part of the 30S ribosomal subunit. Contacts protein S5. The interaction surface between S4 and S5 is involved in control of translational fidelity.

The protein resides in the plastid. It is found in the chloroplast. Its function is as follows. One of the primary rRNA binding proteins, it binds directly to 16S rRNA where it nucleates assembly of the body of the 30S subunit. Functionally, with S5 and S12 plays an important role in translational accuracy. The sequence is that of Small ribosomal subunit protein uS4c (rps4) from Crucihimalaya wallichii (Rock-cress).